Reading from the N-terminus, the 660-residue chain is uncharacterized protein (660 aa).

A disordered region spans residues 220 to 239; sequence ADARGQAAAPPQAQAPAPPD. Over residues 222–239 the composition is skewed to low complexity; that stretch reads ARGQAAAPPQAQAPAPPD.

This is an uncharacterized protein from Callospermophilus lateralis (Golden-mantled ground squirrel).